A 325-amino-acid chain; its full sequence is UPF0324 membrane protein Bd1437 (325 aa).

8 helical membrane-spanning segments follow: residues 21-43 (IAALLCFFPFVSSAAALVLGIVL), 58-80 (YTHHLLSLSVIGLGAGMDLMVVG), 87-105 (IGYTVVGISFTLLLGMLIG), 115-137 (STLITVGTAICGGSAIAAVAPTI), 144-166 (VSVALGTVFMLNACALVIFPWIG), 211-230 (ARALWIVPVTFLIGLFYFRG), 243-260 (PWFILGFLIAAALVTWIP), and 302-324 (LQGVGLWIVVASCTLGAILIGWI).

This sequence belongs to the UPF0324 family.

The protein resides in the cell membrane. The protein is UPF0324 membrane protein Bd1437 of Bdellovibrio bacteriovorus (strain ATCC 15356 / DSM 50701 / NCIMB 9529 / HD100).